Here is a 244-residue protein sequence, read N- to C-terminus: Transcriptional activator protein FnrA (244 aa).

The 74-residue stretch at lysine 159–isoleucine 232 folds into the HTH crp-type domain. A DNA-binding region (H-T-H motif) is located at residues arginine 192–threonine 211.

In terms of biological role, transcriptional regulator of arginine deiminase. The sequence is that of Transcriptional activator protein FnrA (fnrA) from Stutzerimonas stutzeri (Pseudomonas stutzeri).